Consider the following 127-residue polypeptide: NADPH-dependent 7-cyano-7-deazaguanine reductase (127 aa).

The active-site Thioimide intermediate is Cys40. The active-site Proton donor is Asp47. Residues 62-64 (VEL) and 81-82 (HE) each bind substrate.

This sequence belongs to the GTP cyclohydrolase I family. QueF type 1 subfamily.

The protein resides in the cytoplasm. The catalysed reaction is 7-aminomethyl-7-carbaguanine + 2 NADP(+) = 7-cyano-7-deazaguanine + 2 NADPH + 3 H(+). Its pathway is tRNA modification; tRNA-queuosine biosynthesis. In terms of biological role, catalyzes the NADPH-dependent reduction of 7-cyano-7-deazaguanine (preQ0) to 7-aminomethyl-7-deazaguanine (preQ1). The chain is NADPH-dependent 7-cyano-7-deazaguanine reductase from Campylobacter jejuni subsp. jejuni serotype O:6 (strain 81116 / NCTC 11828).